Here is a 615-residue protein sequence, read N- to C-terminus: DNA mismatch repair protein MutL (615 aa).

Residues 363–397 are disordered; sequence FAEPAAREPVAPRYTPAPASGSRPAAPWPNAQPGY. A compositionally biased stretch (low complexity) spans 364–391; the sequence is AEPAAREPVAPRYTPAPASGSRPAAPWP.

Belongs to the DNA mismatch repair MutL/HexB family.

This protein is involved in the repair of mismatches in DNA. It is required for dam-dependent methyl-directed DNA mismatch repair. May act as a 'molecular matchmaker', a protein that promotes the formation of a stable complex between two or more DNA-binding proteins in an ATP-dependent manner without itself being part of a final effector complex. The polypeptide is DNA mismatch repair protein MutL (Escherichia coli (strain ATCC 8739 / DSM 1576 / NBRC 3972 / NCIMB 8545 / WDCM 00012 / Crooks)).